The primary structure comprises 336 residues: MVRHHQPRKGSVAFSPRKRAAKETPRIKSWPQNDEPKLLGLAGYKVGMTHALVTDSDKNSPTNGMDVFTPVTVLEVPPVVVMGIRAYEKTSRGLKVITEVLADNLDEELSRKISLPKEYNKSEAIAKIQGVLDKTEDIKVLVHTNPKVTSVPKKKPDIFECGIGGANPEEKLNTALELLGNEVKASDILNEGQFVDAIATTKGKGFQGVVKRWGIRIQYGKAVRAGKGRHVGSIGPWTPSRTMWTVAQAGQMGYHKRTEFNKKILKIASADEVDQINPDGGFVKYGLVKNDYVLVKGSLPGPSKRLVILRQPIRPNNKSEDMPQINYISTKSKQGV.

Residues 1–34 (MVRHHQPRKGSVAFSPRKRAAKETPRIKSWPQND) form a disordered region.

Belongs to the universal ribosomal protein uL3 family. Part of the 50S ribosomal subunit. Forms a cluster with proteins L14 and L24e.

Its function is as follows. One of the primary rRNA binding proteins, it binds directly near the 3'-end of the 23S rRNA, where it nucleates assembly of the 50S subunit. This chain is Large ribosomal subunit protein uL3, found in Methanobrevibacter smithii (strain ATCC 35061 / DSM 861 / OCM 144 / PS).